The following is a 112-amino-acid chain: Protein F-112 (112 aa).

Essential for virus function. The chain is Protein F-112 from Saccharolobus solfataricus (Sulfolobus solfataricus).